Here is a 1979-residue protein sequence, read N- to C-terminus: Repetitive organellar protein (1979 aa).

Positions 1–12 (MVFTFKNKKKKK) are enriched in basic residues. Disordered regions lie at residues 1–42 (MVFT…DSWY) and 54–116 (TKYK…NNYS). Composition is skewed to basic and acidic residues over residues 13–24 (EASSDKVSKESF) and 31–42 (NNEKREKSDSWY). A compositionally biased stretch (low complexity) spans 68–114 (EDIINNNNNNNNDNNNDNNNDNNNDNNNDNNNDNNNENNNDNNNFNN). 6 coiled-coil regions span residues 127 to 366 (DNEL…LKDE), 412 to 666 (LKVY…EMEL), 693 to 876 (LKES…KKKQ), 992 to 1094 (KKKH…YKTI), 1126 to 1307 (VDKI…MNIK), and 1398 to 1467 (IANY…LTSQ).

The protein localises to the host cell membrane. This chain is Repetitive organellar protein, found in Plasmodium falciparum (isolate 3D7).